Consider the following 231-residue polypeptide: Cytochrome c oxidase subunit 2 (231 aa).

At 1–14 (MAHPAQLGLQNATS) the chain is on the mitochondrial intermembrane side. Residues 15 to 45 (PIMEELIAFHDHALMIIFLISSLVLYIISLM) traverse the membrane as a helical segment. Residues 46 to 59 (LTTKLTHTSTMNAQ) are Mitochondrial matrix-facing. The chain crosses the membrane as a helical span at residues 60 to 87 (EIEMVWTILPAIILIMIALPSLRILYMT). At 88–231 (DEFNKPYLTL…WASYLYIVSL (144 aa)) the chain is on the mitochondrial intermembrane side. Residues His-161, Cys-196, Glu-198, Cys-200, His-204, and Met-207 each contribute to the Cu cation site. Residue Glu-198 participates in Mg(2+) binding.

This sequence belongs to the cytochrome c oxidase subunit 2 family. Component of the cytochrome c oxidase (complex IV, CIV), a multisubunit enzyme composed of 14 subunits. The complex is composed of a catalytic core of 3 subunits MT-CO1, MT-CO2 and MT-CO3, encoded in the mitochondrial DNA, and 11 supernumerary subunits COX4I, COX5A, COX5B, COX6A, COX6B, COX6C, COX7A, COX7B, COX7C, COX8 and NDUFA4, which are encoded in the nuclear genome. The complex exists as a monomer or a dimer and forms supercomplexes (SCs) in the inner mitochondrial membrane with NADH-ubiquinone oxidoreductase (complex I, CI) and ubiquinol-cytochrome c oxidoreductase (cytochrome b-c1 complex, complex III, CIII), resulting in different assemblies (supercomplex SCI(1)III(2)IV(1) and megacomplex MCI(2)III(2)IV(2)). Found in a complex with TMEM177, COA6, COX18, COX20, SCO1 and SCO2. Interacts with TMEM177 in a COX20-dependent manner. Interacts with COX20. Interacts with COX16. It depends on Cu cation as a cofactor.

Its subcellular location is the mitochondrion inner membrane. The catalysed reaction is 4 Fe(II)-[cytochrome c] + O2 + 8 H(+)(in) = 4 Fe(III)-[cytochrome c] + 2 H2O + 4 H(+)(out). Functionally, component of the cytochrome c oxidase, the last enzyme in the mitochondrial electron transport chain which drives oxidative phosphorylation. The respiratory chain contains 3 multisubunit complexes succinate dehydrogenase (complex II, CII), ubiquinol-cytochrome c oxidoreductase (cytochrome b-c1 complex, complex III, CIII) and cytochrome c oxidase (complex IV, CIV), that cooperate to transfer electrons derived from NADH and succinate to molecular oxygen, creating an electrochemical gradient over the inner membrane that drives transmembrane transport and the ATP synthase. Cytochrome c oxidase is the component of the respiratory chain that catalyzes the reduction of oxygen to water. Electrons originating from reduced cytochrome c in the intermembrane space (IMS) are transferred via the dinuclear copper A center (CU(A)) of subunit 2 and heme A of subunit 1 to the active site in subunit 1, a binuclear center (BNC) formed by heme A3 and copper B (CU(B)). The BNC reduces molecular oxygen to 2 water molecules using 4 electrons from cytochrome c in the IMS and 4 protons from the mitochondrial matrix. This chain is Cytochrome c oxidase subunit 2 (MT-CO2), found in Lagothrix lagotricha (Brown woolly monkey).